Reading from the N-terminus, the 389-residue chain is Probable tRNA pseudouridine synthase D 1 (389 aa).

The active-site Nucleophile is the Asp-63. The region spanning 135 to 345 is the TRUD domain; the sequence is GAPNYYDDQR…KYTKRPIISI (211 aa).

This sequence belongs to the pseudouridine synthase TruD family.

It carries out the reaction uridine(13) in tRNA = pseudouridine(13) in tRNA. Functionally, could be responsible for synthesis of pseudouridine from uracil-13 in transfer RNAs. This is Probable tRNA pseudouridine synthase D 1 (truD1) from Methanococcus maripaludis (strain DSM 14266 / JCM 13030 / NBRC 101832 / S2 / LL).